The following is a 544-amino-acid chain: Chaperonin GroEL (544 aa).

Residues 30-33 (TLGP), Lys51, 87-91 (DGTTT), Gly415, and Asp495 each bind ATP.

This sequence belongs to the chaperonin (HSP60) family. Forms a cylinder of 14 subunits composed of two heptameric rings stacked back-to-back. Interacts with the co-chaperonin GroES.

It is found in the cytoplasm. It catalyses the reaction ATP + H2O + a folded polypeptide = ADP + phosphate + an unfolded polypeptide.. Together with its co-chaperonin GroES, plays an essential role in assisting protein folding. The GroEL-GroES system forms a nano-cage that allows encapsulation of the non-native substrate proteins and provides a physical environment optimized to promote and accelerate protein folding. The polypeptide is Chaperonin GroEL (Neisseria flavescens).